The sequence spans 434 residues: Beta-enolase (434 aa).

Ala2 is subject to N-acetylalanine. Thr72 carries the post-translational modification Phosphothreonine. Ser83 and Ser157 each carry phosphoserine. Residues His158 and Glu167 each coordinate substrate. The residue at position 176 (Ser176) is a Phosphoserine. Position 205 is a phosphothreonine (Thr205). Residue Glu210 is the Proton donor of the active site. Residue Thr229 is modified to Phosphothreonine. Phosphotyrosine is present on Tyr236. Asp245 provides a ligand contact to Mg(2+). Ser263 carries the phosphoserine modification. Residues Glu293 and Asp318 each contribute to the substrate site. The Mg(2+) site is built by Glu293 and Asp318. The active-site Proton acceptor is the Lys343. Residues 370–373 (SHRS) and Lys394 each bind substrate.

Belongs to the enolase family. As to quaternary structure, mammalian enolase is composed of 3 isozyme subunits, alpha, beta and gamma, which can form homodimers or heterodimers which are cell-type and development-specific. Interacts with PNKD. Mg(2+) is required as a cofactor. As to expression, the alpha/alpha homodimer is expressed in embryo and in most adult tissues. The alpha/beta heterodimer and the beta/beta homodimer are found in striated muscle, and the alpha/gamma heterodimer and the gamma/gamma homodimer in neurons.

The protein resides in the cytoplasm. It catalyses the reaction (2R)-2-phosphoglycerate = phosphoenolpyruvate + H2O. It functions in the pathway carbohydrate degradation; glycolysis; pyruvate from D-glyceraldehyde 3-phosphate: step 4/5. In terms of biological role, glycolytic enzyme that catalyzes the conversion of 2-phosphoglycerate to phosphoenolpyruvate. Appears to have a function in striated muscle development and regeneration. The chain is Beta-enolase (Eno3) from Rattus norvegicus (Rat).